The chain runs to 282 residues: NH(3)-dependent NAD(+) synthetase (282 aa).

ATP is bound at residue 51 to 58 (GISGGVDS). Residue aspartate 57 participates in Mg(2+) binding. Residue arginine 148 coordinates deamido-NAD(+). ATP is bound at residue threonine 168. Glutamate 173 lines the Mg(2+) pocket. Lysine 181 and aspartate 188 together coordinate deamido-NAD(+). ATP-binding residues include lysine 197 and threonine 219. 268 to 269 (HK) lines the deamido-NAD(+) pocket.

Belongs to the NAD synthetase family. In terms of assembly, homodimer.

It carries out the reaction deamido-NAD(+) + NH4(+) + ATP = AMP + diphosphate + NAD(+) + H(+). Its pathway is cofactor biosynthesis; NAD(+) biosynthesis; NAD(+) from deamido-NAD(+) (ammonia route): step 1/1. Functionally, catalyzes the ATP-dependent amidation of deamido-NAD to form NAD. Uses ammonia as a nitrogen source. The protein is NH(3)-dependent NAD(+) synthetase of Burkholderia cenocepacia (strain ATCC BAA-245 / DSM 16553 / LMG 16656 / NCTC 13227 / J2315 / CF5610) (Burkholderia cepacia (strain J2315)).